A 687-amino-acid chain; its full sequence is Putative metabolite transport protein YDL199C (687 aa).

A disordered region spans residues 1–22 (MKPPLNMSRSNKPLTQEANSSA). The Extracellular segment spans residues 1-122 (MKPPLNMSRS…RHSSRVLRTS (122 aa)). A compositionally biased stretch (polar residues) spans 7 to 22 (MSRSNKPLTQEANSSA). The residue at position 90 (Ser-90) is a Phosphoserine. A helical transmembrane segment spans residues 123-143 (FISFVVLVSSLSGLDQGLISG). The Cytoplasmic portion of the chain corresponds to 144-164 (NVMTLSFQKYFHYPLTSPLGN). Residues 165-185 (IVSIVNLGAFMASLFVYSGIL) traverse the membrane as a helical segment. At 186–192 (EPCSRKK) the chain is on the extracellular side. A helical transmembrane segment spans residues 193–213 (MLQISTMIYSLGAIVQVLALN). At 214–216 (QWC) the chain is on the cytoplasmic side. The helical transmembrane segment at 217–237 (LLLGRFLLGVGMGFAFSMVII) threads the bilayer. Topologically, residues 238–251 (YQFEFPLPCIRKRT) are extracellular. Residues 252–272 (LISIQCVSSVIAYSFGIWINC) traverse the membrane as a helical segment. Over 273–283 (AFRYLGFAWRY) the chain is Cytoplasmic. The chain crosses the membrane as a helical span at residues 284–304 (PLSTHVALGIILNLMSFYLIL). Residues 305–410 (ESPSWLLKQK…MGRGERKSIY (106 aa)) lie on the Extracellular side of the membrane. Residues 411-431 (LTGLNALIYSIVILAYVPLVL) traverse the membrane as a helical segment. Residues 432-439 (RKRKEKTN) are Cytoplasmic-facing. The chain crosses the membrane as a helical span at residues 440-460 (VLLGSIVMCALLFTISFTDWF). At 461–469 (PKSTTRYIS) the chain is on the extracellular side. A helical membrane pass occupies residues 470–490 (ILFAVFLFTHFISWDSIGWVM). At 491–500 (TIELLPHLSQ) the chain is on the cytoplasmic side. A helical transmembrane segment spans residues 501–521 (APVILLVSNFYWIFKWFVSLI). Over 522–533 (TPILIDRLSWKF) the chain is Extracellular. Residues 534-554 (YLIPSLSSFISIIFVLKIFPI) form a helical membrane-spanning segment. The Cytoplasmic portion of the chain corresponds to 555–687 (ETRDERLDSD…QNSPGDMAVA (133 aa)). 2 disordered regions span residues 561-587 (LDSD…SEFS) and 654-687 (SFHN…MAVA). A compositionally biased stretch (polar residues) spans 660–673 (DPNISDNIAANKPS).

It belongs to the major facilitator superfamily. Sugar transporter (TC 2.A.1.1) family.

The protein resides in the membrane. The protein is Putative metabolite transport protein YDL199C of Saccharomyces cerevisiae (strain ATCC 204508 / S288c) (Baker's yeast).